A 910-amino-acid polypeptide reads, in one-letter code: DNA mismatch repair protein MutS (910 aa).

Residues 1-11 (MEAKVEEKEPE) are compositionally biased toward basic and acidic residues. The interval 1–21 (MEAKVEEKEPEPVENAGPDAP) is disordered. Residue 658–665 (GPNMGGKS) coordinates ATP.

Belongs to the DNA mismatch repair MutS family.

Its function is as follows. This protein is involved in the repair of mismatches in DNA. It is possible that it carries out the mismatch recognition step. This protein has a weak ATPase activity. The sequence is that of DNA mismatch repair protein MutS from Brucella canis (strain ATCC 23365 / NCTC 10854 / RM-666).